A 2876-amino-acid chain; its full sequence is Nipped-B-like protein B (2876 aa).

Composition is skewed to polar residues over residues Pro-124–Thr-142 and Tyr-149–Pro-167. Disordered regions lie at residues Pro-124 to Gln-197, Asn-246 to Glu-367, Arg-439 to Lys-494, and Glu-525 to Tyr-1017. Residues Gly-276–Thr-290 show a composition bias toward pro residues. Residues Arg-439 to Lys-457 are compositionally biased toward basic and acidic residues. Residues Pro-471–Ser-480 show a composition bias toward low complexity. A compositionally biased stretch (gly residues) spans Gly-481–Asn-490. Basic and acidic residues-rich tracts occupy residues Ser-556–Val-577, Val-586–Ser-955, and Val-962–Gln-1005. The short motif at Asn-1068 to Ser-1081 is the PxVxL motif element. Disordered stretches follow at residues Met-1088–Leu-1229 and Thr-1724–Glu-1747. Low complexity predominate over residues Ser-1090 to Ser-1100. Basic and acidic residues-rich tracts occupy residues Arg-1104–Lys-1119 and Lys-1156–Arg-1183. Over residues Lys-1212–Lys-1223 the composition is skewed to basic residues. 5 HEAT repeats span residues Ala-1803–Ser-1841, Pro-1879–Thr-1917, Tyr-1981–Lys-2020, Val-2203–Gly-2241, and Leu-2349–Gly-2387. 2 disordered regions span residues Glu-2516–Leu-2590 and Ala-2728–Asn-2774. Basic residues predominate over residues Lys-2519–Lys-2537. Positions Arg-2548–Ser-2563 are enriched in low complexity. Residues Arg-2762–Asn-2774 show a composition bias toward basic and acidic residues.

This sequence belongs to the SCC2/Nipped-B family.

The protein localises to the nucleus. Its function is as follows. May play a structural role in chromatin. Involved in sister chromatid cohesion, possibly by facilitating the cohesin complex loading. Transcription factor, which may promote cortical neuron migration during brain development by regulating the transcription of crucial genes in this process. The polypeptide is Nipped-B-like protein B (nipblb) (Danio rerio (Zebrafish)).